A 316-amino-acid polypeptide reads, in one-letter code: uncharacterized protein (316 aa).

The region spanning 16–89 is the S4 RNA-binding domain; that stretch reads ERLDKFLARA…IPINIIYEDE (74 aa). Asp-140 is an active-site residue.

This sequence belongs to the pseudouridine synthase RluA family.

It catalyses the reaction a uridine in RNA = a pseudouridine in RNA. This is an uncharacterized protein from Aquifex aeolicus (strain VF5).